An 87-amino-acid polypeptide reads, in one-letter code: Phosphoribosyl-ATP pyrophosphatase (87 aa).

This sequence belongs to the PRA-PH family.

Its subcellular location is the cytoplasm. The catalysed reaction is 1-(5-phospho-beta-D-ribosyl)-ATP + H2O = 1-(5-phospho-beta-D-ribosyl)-5'-AMP + diphosphate + H(+). It functions in the pathway amino-acid biosynthesis; L-histidine biosynthesis; L-histidine from 5-phospho-alpha-D-ribose 1-diphosphate: step 2/9. The chain is Phosphoribosyl-ATP pyrophosphatase from Nocardioides sp. (strain ATCC BAA-499 / JS614).